We begin with the raw amino-acid sequence, 356 residues long: S-adenosylmethionine:tRNA ribosyltransferase-isomerase (356 aa).

It belongs to the QueA family. In terms of assembly, monomer.

It is found in the cytoplasm. The enzyme catalyses 7-aminomethyl-7-carbaguanosine(34) in tRNA + S-adenosyl-L-methionine = epoxyqueuosine(34) in tRNA + adenine + L-methionine + 2 H(+). It functions in the pathway tRNA modification; tRNA-queuosine biosynthesis. Its function is as follows. Transfers and isomerizes the ribose moiety from AdoMet to the 7-aminomethyl group of 7-deazaguanine (preQ1-tRNA) to give epoxyqueuosine (oQ-tRNA). The sequence is that of S-adenosylmethionine:tRNA ribosyltransferase-isomerase from Escherichia coli O6:K15:H31 (strain 536 / UPEC).